Reading from the N-terminus, the 141-residue chain is Large ribosomal subunit protein uL11 (141 aa).

The protein belongs to the universal ribosomal protein uL11 family. As to quaternary structure, part of the ribosomal stalk of the 50S ribosomal subunit. Interacts with L10 and the large rRNA to form the base of the stalk. L10 forms an elongated spine to which L12 dimers bind in a sequential fashion forming a multimeric L10(L12)X complex. Post-translationally, one or more lysine residues are methylated.

Forms part of the ribosomal stalk which helps the ribosome interact with GTP-bound translation factors. The polypeptide is Large ribosomal subunit protein uL11 (Synechococcus sp. (strain CC9605)).